A 256-amino-acid polypeptide reads, in one-letter code: Hydroxyethylthiazole kinase (256 aa).

Substrate is bound at residue M38. The ATP site is built by T114 and T159. Residue G186 coordinates substrate.

It belongs to the Thz kinase family. Requires Mg(2+) as cofactor.

It carries out the reaction 5-(2-hydroxyethyl)-4-methylthiazole + ATP = 4-methyl-5-(2-phosphooxyethyl)-thiazole + ADP + H(+). It participates in cofactor biosynthesis; thiamine diphosphate biosynthesis; 4-methyl-5-(2-phosphoethyl)-thiazole from 5-(2-hydroxyethyl)-4-methylthiazole: step 1/1. In terms of biological role, catalyzes the phosphorylation of the hydroxyl group of 4-methyl-5-beta-hydroxyethylthiazole (THZ). In Streptococcus agalactiae serotype V (strain ATCC BAA-611 / 2603 V/R), this protein is Hydroxyethylthiazole kinase.